Consider the following 200-residue polypeptide: ATP-dependent Clp protease proteolytic subunit 2 (200 aa).

The active-site Nucleophile is S100.

This sequence belongs to the peptidase S14 family. As to quaternary structure, fourteen ClpP subunits assemble into 2 heptameric rings which stack back to back to give a disk-like structure with a central cavity, resembling the structure of eukaryotic proteasomes.

The protein localises to the cytoplasm. It carries out the reaction Hydrolysis of proteins to small peptides in the presence of ATP and magnesium. alpha-casein is the usual test substrate. In the absence of ATP, only oligopeptides shorter than five residues are hydrolyzed (such as succinyl-Leu-Tyr-|-NHMec, and Leu-Tyr-Leu-|-Tyr-Trp, in which cleavage of the -Tyr-|-Leu- and -Tyr-|-Trp bonds also occurs).. In terms of biological role, cleaves peptides in various proteins in a process that requires ATP hydrolysis. Has a chymotrypsin-like activity. Plays a major role in the degradation of misfolded proteins. In Streptomyces avermitilis (strain ATCC 31267 / DSM 46492 / JCM 5070 / NBRC 14893 / NCIMB 12804 / NRRL 8165 / MA-4680), this protein is ATP-dependent Clp protease proteolytic subunit 2.